The sequence spans 640 residues: Threonine--tRNA ligase (640 aa).

The TGS domain occupies 1–63 (MSSVTVTLPD…SEDCEIEIVT (63 aa)). The segment at 242–533 (DHRKLGREMD…LIEHYNGRFP (292 aa)) is catalytic. The Zn(2+) site is built by C334, H385, and H510.

It belongs to the class-II aminoacyl-tRNA synthetase family. In terms of assembly, homodimer. Zn(2+) serves as cofactor.

It localises to the cytoplasm. The catalysed reaction is tRNA(Thr) + L-threonine + ATP = L-threonyl-tRNA(Thr) + AMP + diphosphate + H(+). Functionally, catalyzes the attachment of threonine to tRNA(Thr) in a two-step reaction: L-threonine is first activated by ATP to form Thr-AMP and then transferred to the acceptor end of tRNA(Thr). This chain is Threonine--tRNA ligase, found in Halobacterium salinarum (strain ATCC 29341 / DSM 671 / R1).